We begin with the raw amino-acid sequence, 258 residues long: Chymotrypsin-2 (258 aa).

Positions 1–17 are cleaved as a signal peptide; the sequence is MLRKVFAVVSVLLVVSA. Positions 18–32 are cleaved as a propeptide — activation peptide; that stretch reads AKVTKLVLDDHYVNR. In terms of domain architecture, Peptidase S1 spans 33 to 255; sequence VVGGEVAKNG…YHEWVRTTMA (223 aa). A disulfide bridge connects residues cysteine 59 and cysteine 75. Active-site charge relay system residues include histidine 74 and aspartate 119. Cystine bridges form between cysteine 182–cysteine 198 and cysteine 208–cysteine 232. Serine 212 serves as the catalytic Charge relay system.

It belongs to the peptidase S1 family. In terms of tissue distribution, after blood feeding, expression is induced in the midgut epithelium, followed by secretion into the midgut lumen.

The protein localises to the secreted. It catalyses the reaction Preferential cleavage: Tyr-|-Xaa, Trp-|-Xaa, Phe-|-Xaa, Leu-|-Xaa.. In Anopheles gambiae (African malaria mosquito), this protein is Chymotrypsin-2 (CHYM2).